The chain runs to 347 residues: GMP reductase (347 aa).

108–131 (NDFLKLQRILALSPALRFICVDVA) contributes to the NADP(+) binding site. The K(+) site is built by Gly-181 and Gly-183. Catalysis depends on Cys-186, which acts as the Thioimidate intermediate. 216 to 239 (IVGDGGCTCPGDVAKAFGGGADFV) contributes to the NADP(+) binding site.

Belongs to the IMPDH/GMPR family. GuaC type 1 subfamily. Homotetramer.

It carries out the reaction IMP + NH4(+) + NADP(+) = GMP + NADPH + 2 H(+). Its function is as follows. Catalyzes the irreversible NADPH-dependent deamination of GMP to IMP. It functions in the conversion of nucleobase, nucleoside and nucleotide derivatives of G to A nucleotides, and in maintaining the intracellular balance of A and G nucleotides. This chain is GMP reductase, found in Tolumonas auensis (strain DSM 9187 / NBRC 110442 / TA 4).